Here is a 583-residue protein sequence, read N- to C-terminus: Aspartate--tRNA ligase (583 aa).

L-aspartate is bound at residue Glu174. Residues 198-201 (QITK) are aspartate. Arg220 is an L-aspartate binding site. Residues 220–222 (RDE) and Gln229 each bind ATP. His443 lines the L-aspartate pocket. Glu477 is an ATP binding site. Arg484 lines the L-aspartate pocket. 529–532 (GLDR) is an ATP binding site.

Belongs to the class-II aminoacyl-tRNA synthetase family. Type 1 subfamily. In terms of assembly, homodimer.

Its subcellular location is the cytoplasm. The catalysed reaction is tRNA(Asp) + L-aspartate + ATP = L-aspartyl-tRNA(Asp) + AMP + diphosphate. Its function is as follows. Catalyzes the attachment of L-aspartate to tRNA(Asp) in a two-step reaction: L-aspartate is first activated by ATP to form Asp-AMP and then transferred to the acceptor end of tRNA(Asp). The polypeptide is Aspartate--tRNA ligase (Streptococcus agalactiae serotype Ia (strain ATCC 27591 / A909 / CDC SS700)).